The sequence spans 399 residues: Zinc finger TRAF-type-containing protein 1 (399 aa).

A compositionally biased stretch (gly residues) spans 1–13 (MSGAEEAGGGGPA). Positions 1–20 (MSGAEEAGGGGPAAGPAGAV) are disordered. An RING-type; degenerate zinc finger spans residues 106 to 151 (CTVCLDLPKASVYQCTNGHLMCAGCFIHLLADARLKEEQATCPNCR). The segment at 152–210 (CEISKSLCCRNLAVEKAVSELPSECGFCLRQFPRSLLERHQKEECQDRVTQCKYKRIGC) adopts a TRAF-type zinc-finger fold.

Belongs to the ZFTRAF1 family. In terms of assembly, interacts with LGALS3.

The protein localises to the cytoplasm. It is found in the perinuclear region. The chain is Zinc finger TRAF-type-containing protein 1 from Rattus norvegicus (Rat).